The primary structure comprises 143 residues: NADH-quinone oxidoreductase subunit A (143 aa).

A run of 3 helical transmembrane segments spans residues phenylalanine 8–threonine 28, phenylalanine 63–tryptophan 83, and phenylalanine 93–tryptophan 113.

Belongs to the complex I subunit 3 family. In terms of assembly, NDH-1 is composed of 14 different subunits. Subunits NuoA, H, J, K, L, M, N constitute the membrane sector of the complex.

It localises to the cell inner membrane. It carries out the reaction a quinone + NADH + 5 H(+)(in) = a quinol + NAD(+) + 4 H(+)(out). In terms of biological role, NDH-1 shuttles electrons from NADH, via FMN and iron-sulfur (Fe-S) centers, to quinones in the respiratory chain. The immediate electron acceptor for the enzyme in this species is believed to be a menaquinone. Couples the redox reaction to proton translocation (for every two electrons transferred, four hydrogen ions are translocated across the cytoplasmic membrane), and thus conserves the redox energy in a proton gradient. The protein is NADH-quinone oxidoreductase subunit A of Chlorobium phaeovibrioides (strain DSM 265 / 1930) (Prosthecochloris vibrioformis (strain DSM 265)).